Reading from the N-terminus, the 55-residue chain is Putative virulence-regulating protein PA2146 (55 aa).

The segment at 1–55 (MAQHQGGKGNFAEDPKRASEAGKKGGQASGGNFKNDPQRASEAGKKGGQRSHGGN) is disordered. Basic and acidic residues-rich tracts occupy residues 11 to 23 (FAEDPKRASEAGK) and 36 to 45 (DPQRASEAGK).

Belongs to the con-10 family.

In terms of biological role, may be involved in the regulation of the production of pyocyanine, one of the major virulence factors secreted by P.aeruginosa, and other virulence factors. The sequence is that of Putative virulence-regulating protein PA2146 from Pseudomonas aeruginosa (strain ATCC 15692 / DSM 22644 / CIP 104116 / JCM 14847 / LMG 12228 / 1C / PRS 101 / PAO1).